The following is a 431-amino-acid chain: Histidine--tRNA ligase (431 aa).

The protein belongs to the class-II aminoacyl-tRNA synthetase family.

The protein resides in the cytoplasm. It catalyses the reaction tRNA(His) + L-histidine + ATP = L-histidyl-tRNA(His) + AMP + diphosphate + H(+). The polypeptide is Histidine--tRNA ligase (hisS) (Pyrococcus abyssi (strain GE5 / Orsay)).